Reading from the N-terminus, the 281-residue chain is Alcohol dehydrogenase-related 31 kDa protein (281 aa).

Y11–L34 provides a ligand contact to NAD(+). S139 contacts substrate. Y152 functions as the Proton acceptor in the catalytic mechanism.

The protein belongs to the short-chain dehydrogenases/reductases (SDR) family.

This Drosophila ambigua (Fruit fly) protein is Alcohol dehydrogenase-related 31 kDa protein (Adhr).